A 290-amino-acid polypeptide reads, in one-letter code: Ribosomal protein L11 methyltransferase (290 aa).

Residues T136, G157, D179, and N222 each contribute to the S-adenosyl-L-methionine site.

It belongs to the methyltransferase superfamily. PrmA family.

It localises to the cytoplasm. It carries out the reaction L-lysyl-[protein] + 3 S-adenosyl-L-methionine = N(6),N(6),N(6)-trimethyl-L-lysyl-[protein] + 3 S-adenosyl-L-homocysteine + 3 H(+). Methylates ribosomal protein L11. This is Ribosomal protein L11 methyltransferase from Porphyromonas gingivalis (strain ATCC BAA-308 / W83).